The chain runs to 293 residues: Mitochondrial glycine transporter (293 aa).

Solcar repeat units lie at residues 6-85 (GGVP…SRSA), 102-186 (LQSY…AKEM), and 208-291 (ASAM…LLKL). Helical transmembrane passes span 12–37 (LVSGFFGGLASVCALQPLDLLKTRLQ), 60–86 (GTLPSALRTSIGSALYLSLLNYSRSAL), 108–133 (LLTGALSRAAVGLVTMPITVIKVRYE), 161–184 (GAAATTLRDAPYAGLYVLLYEQAK), 212–238 (VNGVSAFLSASLATTLTAPFDTIKTRM), and 266–284 (GLSLRLCRKAMSACIAWGI).

Belongs to the mitochondrial carrier (TC 2.A.29) family. SLC25A38 subfamily.

The protein localises to the mitochondrion inner membrane. The enzyme catalyses glycine(in) = glycine(out). Its function is as follows. Mitochondrial glycine transporter that imports glycine into the mitochondrial matrix. Plays an important role in providing glycine for the first enzymatic step in heme biosynthesis, the condensation of glycine with succinyl-CoA to produce 5-aminolevulinate (ALA) in the mitochondrial matrix. The sequence is that of Mitochondrial glycine transporter from Eremothecium gossypii (strain ATCC 10895 / CBS 109.51 / FGSC 9923 / NRRL Y-1056) (Yeast).